The following is a 284-amino-acid chain: Bifunctional protein FolD (284 aa).

NADP(+) is bound by residues 166–168 (GAS) and Ile-232.

Belongs to the tetrahydrofolate dehydrogenase/cyclohydrolase family. As to quaternary structure, homodimer.

It carries out the reaction (6R)-5,10-methylene-5,6,7,8-tetrahydrofolate + NADP(+) = (6R)-5,10-methenyltetrahydrofolate + NADPH. The catalysed reaction is (6R)-5,10-methenyltetrahydrofolate + H2O = (6R)-10-formyltetrahydrofolate + H(+). It functions in the pathway one-carbon metabolism; tetrahydrofolate interconversion. Its function is as follows. Catalyzes the oxidation of 5,10-methylenetetrahydrofolate to 5,10-methenyltetrahydrofolate and then the hydrolysis of 5,10-methenyltetrahydrofolate to 10-formyltetrahydrofolate. The sequence is that of Bifunctional protein FolD from Pseudoalteromonas translucida (strain TAC 125).